A 76-amino-acid polypeptide reads, in one-letter code: Protein RALF-like 30 (76 aa).

Residues 1 to 22 (MKAWVICLMVISIFMMIEPTLA) form the signal peptide. 2 disulfide bridges follow: C37/C46 and C66/C72.

Belongs to the plant rapid alkalinization factor (RALF) family.

It is found in the secreted. Its function is as follows. Cell signaling peptide that may regulate plant stress, growth, and development. Mediates a rapid alkalinization of extracellular space by mediating a transient increase in the cytoplasmic Ca(2+) concentration leading to a calcium-dependent signaling events through a cell surface receptor and a concomitant activation of some intracellular mitogen-activated protein kinases. This chain is Protein RALF-like 30 (RALFL30), found in Arabidopsis thaliana (Mouse-ear cress).